Here is a 369-residue protein sequence, read N- to C-terminus: Delta(12)-oleate desaturase (369 aa).

2 consecutive transmembrane segments (helical) span residues 41-61 (LLSD…YFPL) and 69-89 (IAWP…WVIA). The Histidine box-1 signature appears at 90 to 94 (HECGH). A helical membrane pass occupies residues 102 to 122 (LIDDIVGLFFHSALLVPYFSW). The Histidine box-2 signature appears at 126–130 (HRRHH). 3 consecutive transmembrane segments (helical) span residues 164-184 (LISL…FNMS), 207-227 (WIQV…LYRI), and 234-254 (FWVM…LVLI). The Histidine box-3 motif lies at 300–304 (HVVHH).

It belongs to the fatty acid desaturase type 1 family.

The protein localises to the membrane. It participates in lipid metabolism; polyunsaturated fatty acid biosynthesis. Functionally, delta(12)-fatty acid desaturase producing in a heterologous system linoleic acid (18:2(9Z,12Z)) and to a lower extent hexadecadienoic acid (16:2(9Z,12Z)). This Trichosanthes kirilowii (Chinese snake gourd) protein is Delta(12)-oleate desaturase.